The chain runs to 483 residues: Glutamyl-tRNA(Gln) amidotransferase subunit A (483 aa).

Residues Lys77 and Ser152 each act as charge relay system in the active site. Ser176 serves as the catalytic Acyl-ester intermediate.

It belongs to the amidase family. GatA subfamily. Heterotrimer of A, B and C subunits.

The enzyme catalyses L-glutamyl-tRNA(Gln) + L-glutamine + ATP + H2O = L-glutaminyl-tRNA(Gln) + L-glutamate + ADP + phosphate + H(+). In terms of biological role, allows the formation of correctly charged Gln-tRNA(Gln) through the transamidation of misacylated Glu-tRNA(Gln) in organisms which lack glutaminyl-tRNA synthetase. The reaction takes place in the presence of glutamine and ATP through an activated gamma-phospho-Glu-tRNA(Gln). This chain is Glutamyl-tRNA(Gln) amidotransferase subunit A, found in Listeria innocua serovar 6a (strain ATCC BAA-680 / CLIP 11262).